Reading from the N-terminus, the 438-residue chain is GTPase Obg (438 aa).

The 159-residue stretch at 6–164 folds into the Obg domain; the sequence is AEFVDRVKIF…RWLELELKIL (159 aa). The region spanning 165–335 is the OBG-type G domain; sequence ADVGLVGYPN…LLDRVASIVR (171 aa). Residues 171–178, 196–200, 217–220, 287–290, and 316–318 contribute to the GTP site; these read GYPNVGKS, FTTLV, DIPG, NKID, and SAV. Residues serine 178 and threonine 198 each contribute to the Mg(2+) site. In terms of domain architecture, OCT spans 358–438; it reads VWRKLPERFE…IGNFEFEYRE (81 aa).

It belongs to the TRAFAC class OBG-HflX-like GTPase superfamily. OBG GTPase family. Monomer. It depends on Mg(2+) as a cofactor.

Its subcellular location is the cytoplasm. In terms of biological role, an essential GTPase which binds GTP, GDP and possibly (p)ppGpp with moderate affinity, with high nucleotide exchange rates and a fairly low GTP hydrolysis rate. Plays a role in control of the cell cycle, stress response, ribosome biogenesis and in those bacteria that undergo differentiation, in morphogenesis control. This chain is GTPase Obg, found in Thermotoga neapolitana (strain ATCC 49049 / DSM 4359 / NBRC 107923 / NS-E).